A 328-amino-acid chain; its full sequence is Putative HTH-type transcriptional regulatory protein MA_3524 (328 aa).

In terms of domain architecture, HTH cro/C1-type spans 132–190; it reads LKKARTDQSMSLGTLASMVGVSRRTISKYEEEGMDASIDVVLQLEDIFGVELARPIDIL. A DNA-binding region (H-T-H motif) is located at residues 143–162; it reads LGTLASMVGVSRRTISKYEE.

The chain is Putative HTH-type transcriptional regulatory protein MA_3524 from Methanosarcina acetivorans (strain ATCC 35395 / DSM 2834 / JCM 12185 / C2A).